Reading from the N-terminus, the 85-residue chain is Large ribosomal subunit protein bL27 (85 aa).

The tract at residues 1–21 (MAHKKGASSSRNGRDSNAQRL) is disordered. The segment covering 7–19 (ASSSRNGRDSNAQ) has biased composition (polar residues).

Belongs to the bacterial ribosomal protein bL27 family.

The chain is Large ribosomal subunit protein bL27 from Beutenbergia cavernae (strain ATCC BAA-8 / DSM 12333 / CCUG 43141 / JCM 11478 / NBRC 16432 / NCIMB 13614 / HKI 0122).